The sequence spans 113 residues: Putative anti-sigma factor antagonist TM_1081 (113 aa).

In terms of domain architecture, STAS spans Met1 to Val110. Ser55 carries the post-translational modification Phosphoserine.

It belongs to the anti-sigma-factor antagonist family. In terms of processing, phosphorylated on a serine residue.

In terms of biological role, in the phosphorylated form it could act as an anti-anti-sigma factor that counteracts an anti-sigma factor and thus releases a sigma factor from inhibition. This Thermotoga maritima (strain ATCC 43589 / DSM 3109 / JCM 10099 / NBRC 100826 / MSB8) protein is Putative anti-sigma factor antagonist TM_1081.